Here is a 143-residue protein sequence, read N- to C-terminus: Large ribosomal subunit protein uL11 (143 aa).

It belongs to the universal ribosomal protein uL11 family. As to quaternary structure, part of the ribosomal stalk of the 50S ribosomal subunit. Interacts with L10 and the large rRNA to form the base of the stalk. L10 forms an elongated spine to which L12 dimers bind in a sequential fashion forming a multimeric L10(L12)X complex. Post-translationally, one or more lysine residues are methylated.

Functionally, forms part of the ribosomal stalk which helps the ribosome interact with GTP-bound translation factors. The protein is Large ribosomal subunit protein uL11 of Paenarthrobacter aurescens (strain TC1).